The following is a 145-amino-acid chain: MRTTFMAKANEVERKWYVVDAEGQTLGRLSTEVASILRGKHKPTFTPHVDTGDHVIIINAEKIHLTGNKLNDKIYYRHTNHPGGLKQRTALEMRTNYPVQMLELAIKGMLPKGRLGRQVSKKLNVYAGAEHPHQAQQPEVYELRG.

The protein belongs to the universal ribosomal protein uL13 family. As to quaternary structure, part of the 50S ribosomal subunit.

This protein is one of the early assembly proteins of the 50S ribosomal subunit, although it is not seen to bind rRNA by itself. It is important during the early stages of 50S assembly. The chain is Large ribosomal subunit protein uL13 from Bacillus mycoides (strain KBAB4) (Bacillus weihenstephanensis).